The primary structure comprises 166 residues: Interferon gamma (166 aa).

A signal peptide spans 1 to 23 (MKYTSYFLALQLCLLLGFSGSYG). Gln-24 carries the post-translational modification Pyrrolidone carboxylic acid. Residues Asn-39 and Asn-106 are each glycosylated (N-linked (GlcNAc...) asparagine).

It belongs to the type II (or gamma) interferon family. In terms of assembly, homodimer. Interacts with IFNGR1 (via extracellular domain); this interaction promotes IFNGR1 dimerization. In terms of tissue distribution, released primarily from activated T lymphocytes.

The protein localises to the secreted. Type II interferon produced by immune cells such as T-cells and NK cells that plays crucial roles in antimicrobial, antiviral, and antitumor responses by activating effector immune cells and enhancing antigen presentation. Primarily signals through the JAK-STAT pathway after interaction with its receptor IFNGR1 to affect gene regulation. Upon IFNG binding, IFNGR1 intracellular domain opens out to allow association of downstream signaling components JAK2, JAK1 and STAT1, leading to STAT1 activation, nuclear translocation and transcription of IFNG-regulated genes. Many of the induced genes are transcription factors such as IRF1 that are able to further drive regulation of a next wave of transcription. Plays a role in class I antigen presentation pathway by inducing a replacement of catalytic proteasome subunits with immunoproteasome subunits. In turn, increases the quantity, quality, and repertoire of peptides for class I MHC loading. Increases the efficiency of peptide generation also by inducing the expression of activator PA28 that associates with the proteasome and alters its proteolytic cleavage preference. Up-regulates as well MHC II complexes on the cell surface by promoting expression of several key molecules such as cathepsins B/CTSB, H/CTSH, and L/CTSL. Participates in the regulation of hematopoietic stem cells during development and under homeostatic conditions by affecting their development, quiescence, and differentiation. The sequence is that of Interferon gamma (IFNG) from Moschus berezovskii (Chinese forest musk deer).